The chain runs to 431 residues: Citrate synthase 1 (431 aa).

Residues H309 and D366 contribute to the active site.

The protein belongs to the citrate synthase family. In terms of assembly, homohexamer.

The catalysed reaction is oxaloacetate + acetyl-CoA + H2O = citrate + CoA + H(+). It participates in carbohydrate metabolism; tricarboxylic acid cycle; isocitrate from oxaloacetate: step 1/2. The polypeptide is Citrate synthase 1 (gltA2) (Mycobacterium tuberculosis (strain CDC 1551 / Oshkosh)).